The primary structure comprises 237 residues: Mannose-specific lectin alpha chain (237 aa).

The Mn(2+) site is built by glutamate 8 and aspartate 10. 4 residues coordinate Ca(2+): aspartate 10, tyrosine 12, asparagine 14, and aspartate 19. Tyrosine 12 lines the a carbohydrate pocket. Positions 19, 24, and 34 each coordinate Mn(2+). Position 99 to 100 (99 to 100 (LY)) interacts with a carbohydrate. Residue aspartate 208 coordinates Ca(2+). Position 228 (arginine 228) interacts with a carbohydrate.

The protein belongs to the leguminous lectin family. As to quaternary structure, homotetramer. In terms of processing, the beta and gamma chains are produced by partial proteolytic processing of the lectin alpha chain by an asparaginyl endopeptidase.

In terms of biological role, D-mannose/D-glucose-binding lectin. Also binds derivatives of glucose and mannose such as more complex glycans. The polypeptide is Mannose-specific lectin alpha chain (Cymbosema roseum (Dioclea purpurea)).